The chain runs to 568 residues: MLVLTETSVGFVVFKLSSDAKIDNKDLWKEFETPEGANKALKVQAIQRFTSTASAVEDLTAVQDGRLTDSLSRFLLDTVGGADDGEKKKKKKKIEEMLVVSDPKLAGTINKALSIPVLSDSSTQDLYRGIRQQLASLLGGVDQKDLNTMSLGLGHSLSRFKLKFSTDKVDTMVIQAIALLDDLDKEINIYAMRVKEWYGWHFPEMAKIIVDNIAFARVVKAMGFRTNAVTTDFSLLLPEDLEATLKSAAELSMGTEISDSDMTHIHSLCDQVISISEYRTQLSEYLRNRMQAIAPNLTALVGELVGARLISHAGSLMNLAKHPASTVQILGAEKALFRALKTKHDTPKYGLIYHASLIGQAPQKLKGKMARMVATKAALSIRVDALSDADSRSDVSAAEVGISNRVKLESRLRALEHQAGIQSVRKVVSANGQQGRQQPRFEMSGVTGSYNAATDNVPLNGDLLPTQPATEEVKEEKDEKKDKKDKKKKRKSEVAEAGDVTMDGDADLSMVAGETKEERRARKEAKKAAKAAKKAAEESGDGDKKSKKRRADEDEDSEKKKKKKKKDE.

Positions 293-417 (IAPNLTALVG…LESRLRALEH (125 aa)) constitute a Nop domain. Residues 430–568 (ANGQQGRQQP…KKKKKKKKDE (139 aa)) form a disordered region. A compositionally biased stretch (basic and acidic residues) spans 471–482 (EEVKEEKDEKKD). The span at 522–533 (RKEAKKAAKAAK) shows a compositional bias: basic residues. Residues 534 to 544 (KAAEESGDGDK) show a composition bias toward basic and acidic residues.

It belongs to the NOP5/NOP56 family.

The protein resides in the nucleus. Its subcellular location is the nucleolus. Its function is as follows. Required for pre-18S rRNA processing. May bind microtubules. The protein is Nucleolar protein 58 (NOP58) of Cryptococcus neoformans var. neoformans serotype D (strain JEC21 / ATCC MYA-565) (Filobasidiella neoformans).